Consider the following 374-residue polypeptide: tRNA-specific 2-thiouridylase MnmA (374 aa).

Residues 12 to 19 (GMSGGVDS) and Met38 each bind ATP. The interval 98–100 (NPD) is interaction with target base in tRNA. Cys103 acts as the Nucleophile in catalysis. Cys103 and Cys200 are oxidised to a cystine. Gly127 is a binding site for ATP. Positions 150–152 (KDQ) are interaction with tRNA. Cys200 functions as the Cysteine persulfide intermediate in the catalytic mechanism. Residues 311–312 (RY) are interaction with tRNA.

Belongs to the MnmA/TRMU family.

The protein resides in the cytoplasm. It catalyses the reaction S-sulfanyl-L-cysteinyl-[protein] + uridine(34) in tRNA + AH2 + ATP = 2-thiouridine(34) in tRNA + L-cysteinyl-[protein] + A + AMP + diphosphate + H(+). Catalyzes the 2-thiolation of uridine at the wobble position (U34) of tRNA, leading to the formation of s(2)U34. The chain is tRNA-specific 2-thiouridylase MnmA from Enterococcus faecalis (strain ATCC 700802 / V583).